Consider the following 209-residue polypeptide: Uracil phosphoribosyltransferase (209 aa).

Residues R79, R104, and 131–139 each bind 5-phospho-alpha-D-ribose 1-diphosphate; that span reads DPMLATGNS. Residues I194 and 199-201 contribute to the uracil site; that span reads GDA. Position 200 (D200) interacts with 5-phospho-alpha-D-ribose 1-diphosphate.

This sequence belongs to the UPRTase family. It depends on Mg(2+) as a cofactor.

It carries out the reaction UMP + diphosphate = 5-phospho-alpha-D-ribose 1-diphosphate + uracil. It functions in the pathway pyrimidine metabolism; UMP biosynthesis via salvage pathway; UMP from uracil: step 1/1. Allosterically activated by GTP. Functionally, catalyzes the conversion of uracil and 5-phospho-alpha-D-ribose 1-diphosphate (PRPP) to UMP and diphosphate. The sequence is that of Uracil phosphoribosyltransferase from Agrobacterium fabrum (strain C58 / ATCC 33970) (Agrobacterium tumefaciens (strain C58)).